Here is a 69-residue protein sequence, read N- to C-terminus: Large ribosomal subunit protein eL38z/eL38y (69 aa).

This sequence belongs to the eukaryotic ribosomal protein eL38 family.

The protein is Large ribosomal subunit protein eL38z/eL38y (RPL38A) of Arabidopsis thaliana (Mouse-ear cress).